We begin with the raw amino-acid sequence, 180 residues long: V-type proton ATPase subunit c''1 (180 aa).

Residues 1-26 (MSGVVALGHASSWGAALVRISPYTFS) lie on the Lumenal side of the membrane. The helical transmembrane segment at 27-47 (AIGIAISIGVSVLGAAWGIYI) threads the bilayer. Topologically, residues 48-66 (TGSSLIGAAIEAPRITSKN) are cytoplasmic. The chain crosses the membrane as a helical span at residues 67–87 (LISVIFCEAVAIYGVIVAIIL). At 88–110 (QTKLESVPSSKMYDAESLRAGYA) the chain is on the lumenal side. A helical transmembrane segment spans residues 111-131 (IFASGIIVGFANLVCGLCVGI). Topologically, residues 132-149 (IGSSCALSDAQNSTLFVK) are cytoplasmic. Residues 150–170 (ILVIEIFGSALGLFGVIVGII) traverse the membrane as a helical segment. At 171–180 (MSAQATWPTK) the chain is on the lumenal side.

The protein belongs to the V-ATPase proteolipid subunit family. V-ATPase is a heteromultimeric enzyme composed of a peripheral catalytic V1 complex (components A to H) attached to an integral membrane V0 proton pore complex (components: a, c, c'', d and e). The proteolipid components c and c'' are present as a hexameric ring that forms the proton-conducting pore. As to expression, preferentially expressed in roots.

The protein localises to the endoplasmic reticulum membrane. The protein resides in the golgi apparatus membrane. In terms of biological role, proton-conducting pore forming subunit of the membrane integral V0 complex of vacuolar ATPase. V-ATPase is responsible for acidifying a variety of intracellular compartments in eukaryotic cells. In Arabidopsis thaliana (Mouse-ear cress), this protein is V-type proton ATPase subunit c''1 (VHA-c''1).